The sequence spans 534 residues: NAD(P)H-quinone oxidoreductase chain 4 (534 aa).

The next 14 membrane-spanning stretches (helical) occupy residues 12–32 (FPWL…IPFF), 44–64 (FALS…INGF), 96–116 (MPLI…AWPV), 120–140 (PKLF…VFAV), 144–164 (LLFF…LAIW), 176–196 (FIIY…AMGF), 220–240 (ILCY…VPLH), 251–271 (TAPV…YALL), 285–305 (FAPL…LTSF), 314–334 (IAYS…SFSS), 340–360 (AMLQ…LVGA), 384–404 (FALW…SGFV), 425–445 (VVMA…LLSM), and 472–492 (VYII…PRLV).

It belongs to the complex I subunit 4 family.

It localises to the cellular thylakoid membrane. It carries out the reaction a plastoquinone + NADH + (n+1) H(+)(in) = a plastoquinol + NAD(+) + n H(+)(out). It catalyses the reaction a plastoquinone + NADPH + (n+1) H(+)(in) = a plastoquinol + NADP(+) + n H(+)(out). Functionally, NDH-1 shuttles electrons from NAD(P)H, via FMN and iron-sulfur (Fe-S) centers, to quinones in the respiratory chain. The immediate electron acceptor for the enzyme in this species is believed to be plastoquinone. Couples the redox reaction to proton translocation (for every two electrons transferred, four hydrogen ions are translocated across the cytoplasmic membrane), and thus conserves the redox energy in a proton gradient. This Prochlorococcus marinus (strain AS9601) protein is NAD(P)H-quinone oxidoreductase chain 4.